Here is a 270-residue protein sequence, read N- to C-terminus: 4-hydroxy-tetrahydrodipicolinate reductase (270 aa).

NAD(+) is bound by residues 8 to 13 (GALGRM), Asp34, 102 to 104 (GTT), and 128 to 131 (SQNY). His160 functions as the Proton donor/acceptor in the catalytic mechanism. His161 lines the (S)-2,3,4,5-tetrahydrodipicolinate pocket. The active-site Proton donor is the Lys164. 170-171 (GT) is a (S)-2,3,4,5-tetrahydrodipicolinate binding site.

It belongs to the DapB family.

The protein resides in the cytoplasm. It carries out the reaction (S)-2,3,4,5-tetrahydrodipicolinate + NAD(+) + H2O = (2S,4S)-4-hydroxy-2,3,4,5-tetrahydrodipicolinate + NADH + H(+). It catalyses the reaction (S)-2,3,4,5-tetrahydrodipicolinate + NADP(+) + H2O = (2S,4S)-4-hydroxy-2,3,4,5-tetrahydrodipicolinate + NADPH + H(+). The protein operates within amino-acid biosynthesis; L-lysine biosynthesis via DAP pathway; (S)-tetrahydrodipicolinate from L-aspartate: step 4/4. Its function is as follows. Catalyzes the conversion of 4-hydroxy-tetrahydrodipicolinate (HTPA) to tetrahydrodipicolinate. In Methanococcus maripaludis (strain C6 / ATCC BAA-1332), this protein is 4-hydroxy-tetrahydrodipicolinate reductase.